The sequence spans 195 residues: Shikimate kinase (195 aa).

33-38 (GAGKTT) provides a ligand contact to ATP. A Mg(2+)-binding site is contributed by threonine 37. Positions 55, 79, and 101 each coordinate substrate. Arginine 139 contacts ATP. Substrate is bound at residue arginine 158. ATP is bound at residue arginine 175.

Belongs to the shikimate kinase family. In terms of assembly, monomer. Mg(2+) serves as cofactor.

Its subcellular location is the cytoplasm. The enzyme catalyses shikimate + ATP = 3-phosphoshikimate + ADP + H(+). It functions in the pathway metabolic intermediate biosynthesis; chorismate biosynthesis; chorismate from D-erythrose 4-phosphate and phosphoenolpyruvate: step 5/7. Catalyzes the specific phosphorylation of the 3-hydroxyl group of shikimic acid using ATP as a cosubstrate. This chain is Shikimate kinase, found in Nitrosospira multiformis (strain ATCC 25196 / NCIMB 11849 / C 71).